Consider the following 666-residue polypeptide: ATP-dependent RNA helicase DDX51 (666 aa).

The residue at position 2 (alanine 2) is an N-acetylalanine. Positions tyrosine 9–glutamate 152 are disordered. Low complexity predominate over residues proline 10–histidine 28. Positions alanine 33 to glutamine 48 are enriched in basic and acidic residues. The span at arginine 49–alanine 58 shows a compositional bias: low complexity. The segment covering arginine 65–arginine 75 has biased composition (basic residues). Residues serine 83 and serine 103 each carry the phosphoserine modification. The span at glutamate 97–proline 108 shows a compositional bias: acidic residues. A Q motif motif is present at residues tyrosine 221–isoleucine 229. A Helicase ATP-binding domain is found at glycine 243–phenylalanine 452. Alanine 256–threonine 263 contributes to the ATP binding site. The DEAD box motif lies at aspartate 371–aspartate 374. One can recognise a Helicase C-terminal domain in the interval valine 494–glutamine 640.

Belongs to the DEAD box helicase family. DDX51/DBP6 subfamily.

The protein resides in the nucleus. It localises to the nucleolus. It catalyses the reaction ATP + H2O = ADP + phosphate + H(+). In terms of biological role, ATP-binding RNA helicase involved in the biogenesis of 60S ribosomal subunits. This is ATP-dependent RNA helicase DDX51 (DDX51) from Homo sapiens (Human).